Reading from the N-terminus, the 589-residue chain is ATP-dependent lipid A-core flippase (589 aa).

6 helical membrane passes run 37–57 (ALAI…PALL), 72–92 (LWLV…SGFL), 151–171 (IMKL…LVYL), 173–193 (WKLM…IQVL), 260–280 (SAIT…IALL), and 286–306 (TTTV…IAPV). Residues 37 to 318 (ALAIGATIVA…LSDAATPVTR (282 aa)) form the ABC transmembrane type-1 domain. The ABC transporter domain occupies 350–584 (IEFADVSVIY…NGAYAHLYRL (235 aa)). 384–391 (GASGSGKT) lines the ATP pocket.

The protein belongs to the ABC transporter superfamily. Lipid exporter (TC 3.A.1.106) family. In terms of assembly, homodimer.

The protein resides in the cell inner membrane. The catalysed reaction is ATP + H2O + lipid A-core oligosaccharideSide 1 = ADP + phosphate + lipid A-core oligosaccharideSide 2.. In terms of biological role, involved in lipopolysaccharide (LPS) biosynthesis. Translocates lipid A-core from the inner to the outer leaflet of the inner membrane. Transmembrane domains (TMD) form a pore in the inner membrane and the ATP-binding domain (NBD) is responsible for energy generation. The protein is ATP-dependent lipid A-core flippase of Polaromonas sp. (strain JS666 / ATCC BAA-500).